A 168-amino-acid polypeptide reads, in one-letter code: HTH-type transcriptional regulator IscR (168 aa).

The region spanning 2–131 (KLTSKGRYAV…NNITLGELMS (130 aa)) is the HTH rrf2-type domain. The segment at residues 28 to 51 (LADISERQGISLSYLEQLFSKLRK) is a DNA-binding region (H-T-H motif). Residues Cys-92, Cys-98, and Cys-104 each coordinate [2Fe-2S] cluster.

The cofactor is [2Fe-2S] cluster.

Regulates the transcription of several operons and genes involved in the biogenesis of Fe-S clusters and Fe-S-containing proteins. The protein is HTH-type transcriptional regulator IscR of Vibrio vulnificus (strain CMCP6).